The chain runs to 436 residues: GTPase Der (436 aa).

EngA-type G domains follow at residues 4-167 (PVVA…PKDA) and 175-351 (IKFS…DNHE). Residues 10–17 (GRPNVGKS), 57–61 (DTGGI), 119–122 (NKVD), 181–188 (GRPNVGKS), 229–233 (DTAGI), and 294–297 (NKWD) each bind GTP. One can recognise a KH-like domain in the interval 352–436 (QRISSAVLND…PIHIIERRRK (85 aa)).

Belongs to the TRAFAC class TrmE-Era-EngA-EngB-Septin-like GTPase superfamily. EngA (Der) GTPase family. Associates with the 50S ribosomal subunit.

In terms of biological role, GTPase that plays an essential role in the late steps of ribosome biogenesis. This chain is GTPase Der, found in Ligilactobacillus salivarius (strain UCC118) (Lactobacillus salivarius).